Here is a 251-residue protein sequence, read N- to C-terminus: Zinc import ATP-binding protein ZnuC (251 aa).

The ABC transporter domain occupies 5–220; sequence VSLENVSVSF…PEFISMFGPR (216 aa). ATP is bound at residue 37–44; that stretch reads GPNGAGKS.

This sequence belongs to the ABC transporter superfamily. Zinc importer (TC 3.A.1.15.5) family. As to quaternary structure, the complex is composed of two ATP-binding proteins (ZnuC), two transmembrane proteins (ZnuB) and a solute-binding protein (ZnuA).

It is found in the cell inner membrane. The catalysed reaction is Zn(2+)(out) + ATP(in) + H2O(in) = Zn(2+)(in) + ADP(in) + phosphate(in) + H(+)(in). In terms of biological role, part of the ABC transporter complex ZnuABC involved in zinc import. Responsible for energy coupling to the transport system. The protein is Zinc import ATP-binding protein ZnuC of Escherichia coli O157:H7.